The sequence spans 189 residues: dCTP deaminase (189 aa).

DCTP is bound by residues 112 to 117, 136 to 138, Gln157, Tyr171, and Gln181; these read KSTYAR and TLE. Glu138 acts as the Proton donor/acceptor in catalysis.

The protein belongs to the dCTP deaminase family. As to quaternary structure, homotrimer.

The catalysed reaction is dCTP + H2O + H(+) = dUTP + NH4(+). Its pathway is pyrimidine metabolism; dUMP biosynthesis; dUMP from dCTP (dUTP route): step 1/2. In terms of biological role, catalyzes the deamination of dCTP to dUTP. This is dCTP deaminase from Teredinibacter turnerae (strain ATCC 39867 / T7901).